Reading from the N-terminus, the 485-residue chain is Proline--tRNA ligase (485 aa).

The protein belongs to the class-II aminoacyl-tRNA synthetase family. ProS type 3 subfamily. As to quaternary structure, homodimer.

Its subcellular location is the cytoplasm. It carries out the reaction tRNA(Pro) + L-proline + ATP = L-prolyl-tRNA(Pro) + AMP + diphosphate. Its function is as follows. Catalyzes the attachment of proline to tRNA(Pro) in a two-step reaction: proline is first activated by ATP to form Pro-AMP and then transferred to the acceptor end of tRNA(Pro). The protein is Proline--tRNA ligase of Methanopyrus kandleri (strain AV19 / DSM 6324 / JCM 9639 / NBRC 100938).